Consider the following 583-residue polypeptide: MADQVKEKTLEETSTWAVAVVCFVLLLISIVIEKLIHKIGSWFKKKNKKALYEALEKVKAELMLMGFISLLLTIGQGYISNICIPKNIAASMHPCSASEEARKYGKKDVPKEDEEENLRRKLLQLVDSLIPRRSLATKGYDKCAEKGKVAFVSAYGMHQLHIFIFVLAVCHVIYCIVTYALGKTKMRRWKKWEEETKTIEYQYSHDPERFRFARDTSFGRRHLSFWSKSTITLWIVCFFRQFFRSVTKVDYLTLRHGFIMAHLAPGSDARFDFRKYIQRSLEEDFKTIVEINPVIWFIAVLFLLTNTNGLNSYLWLPFIPFIVILIVGTKLQVIITKLGLRIQEKGDVVKGTPLVQPGDHFFWFGRPRFILFLIHLVLFTNAFQLAFFVWSTYEFGLKNCFHESRVDVIIRISIGLLVQILCSYVTLPLYALVTQMGSKMKPTVFNERVATALKSWHHTAKKNIKHGRTSESTTPFSSRPTTPTHGSSPIHLLRNAPHKRSRSVDESFANSFSPRNSDFDSWDPESQHETAETSNSNHRSRFGEEESEKKFVSSSVELPPGPGQIRTQHEISTISLRDFSFKR.

Residues 1–15 (MADQVKEKTLEETST) lie on the Extracellular side of the membrane. Residues 16–36 (WAVAVVCFVLLLISIVIEKLI) traverse the membrane as a helical segment. The Cytoplasmic segment spans residues 37 to 61 (HKIGSWFKKKNKKALYEALEKVKAE). Residues 62 to 82 (LMLMGFISLLLTIGQGYISNI) traverse the membrane as a helical segment. Residues 83 to 161 (CIPKNIAASM…VSAYGMHQLH (79 aa)) lie on the Extracellular side of the membrane. The helical transmembrane segment at 162–182 (IFIFVLAVCHVIYCIVTYALG) threads the bilayer. Over 183–284 (KTKMRRWKKW…KYIQRSLEED (102 aa)) the chain is Cytoplasmic. Residues 285–305 (FKTIVEINPVIWFIAVLFLLT) form a helical membrane-spanning segment. Residues 306–314 (NTNGLNSYL) lie on the Extracellular side of the membrane. The helical transmembrane segment at 315–335 (WLPFIPFIVILIVGTKLQVII) threads the bilayer. At 336-368 (TKLGLRIQEKGDVVKGTPLVQPGDHFFWFGRPR) the chain is on the cytoplasmic side. The helical transmembrane segment at 369-389 (FILFLIHLVLFTNAFQLAFFV) threads the bilayer. The Extracellular segment spans residues 390–411 (WSTYEFGLKNCFHESRVDVIIR). The chain crosses the membrane as a helical span at residues 412–432 (ISIGLLVQILCSYVTLPLYAL). The Cytoplasmic portion of the chain corresponds to 433–583 (VTQMGSKMKP…ISLRDFSFKR (151 aa)). Residues 447-468 (ERVATALKSWHHTAKKNIKHGR) form a calmodulin-binding region. A disordered region spans residues 461–583 (KKNIKHGRTS…ISLRDFSFKR (123 aa)). A compositionally biased stretch (low complexity) spans 470–484 (SESTTPFSSRPTTPT). The segment covering 541-551 (RFGEEESEKKF) has biased composition (basic and acidic residues).

It belongs to the MLO family.

The protein localises to the membrane. May be involved in modulation of pathogen defense and leaf cell death. Activity seems to be regulated by Ca(2+)-dependent calmodulin binding and seems not to require heterotrimeric G proteins. This chain is MLO-like protein 6 (MLO6), found in Arabidopsis thaliana (Mouse-ear cress).